A 369-amino-acid polypeptide reads, in one-letter code: tRNA pseudouridine synthase D (369 aa).

The active-site Nucleophile is aspartate 80. The 163-residue stretch at 156–318 (GIPNWFGEQR…LKQERRALRL (163 aa)) folds into the TRUD domain.

It belongs to the pseudouridine synthase TruD family.

It catalyses the reaction uridine(13) in tRNA = pseudouridine(13) in tRNA. In terms of biological role, responsible for synthesis of pseudouridine from uracil-13 in transfer RNAs. The sequence is that of tRNA pseudouridine synthase D from Xanthomonas euvesicatoria pv. vesicatoria (strain 85-10) (Xanthomonas campestris pv. vesicatoria).